The following is an 80-amino-acid chain: Small ribosomal subunit protein uS17 (80 aa).

Belongs to the universal ribosomal protein uS17 family. As to quaternary structure, part of the 30S ribosomal subunit.

In terms of biological role, one of the primary rRNA binding proteins, it binds specifically to the 5'-end of 16S ribosomal RNA. The polypeptide is Small ribosomal subunit protein uS17 (Cereibacter sphaeroides (strain ATCC 17025 / ATH 2.4.3) (Rhodobacter sphaeroides)).